A 617-amino-acid polypeptide reads, in one-letter code: Proline--tRNA ligase (617 aa).

The protein belongs to the class-II aminoacyl-tRNA synthetase family. ProS type 1 subfamily. As to quaternary structure, homodimer.

The protein resides in the cytoplasm. The enzyme catalyses tRNA(Pro) + L-proline + ATP = L-prolyl-tRNA(Pro) + AMP + diphosphate. Its function is as follows. Catalyzes the attachment of proline to tRNA(Pro) in a two-step reaction: proline is first activated by ATP to form Pro-AMP and then transferred to the acceptor end of tRNA(Pro). As ProRS can inadvertently accommodate and process non-cognate amino acids such as alanine and cysteine, to avoid such errors it has two additional distinct editing activities against alanine. One activity is designated as 'pretransfer' editing and involves the tRNA(Pro)-independent hydrolysis of activated Ala-AMP. The other activity is designated 'posttransfer' editing and involves deacylation of mischarged Ala-tRNA(Pro). The misacylated Cys-tRNA(Pro) is not edited by ProRS. In Streptococcus pneumoniae serotype 19F (strain G54), this protein is Proline--tRNA ligase.